A 192-amino-acid chain; its full sequence is Large ribosomal subunit protein uL24c (192 aa).

The N-terminal 47 residues, 1-47 (MAAMAALQSSFTSLSLSSNSFLGQRLFPSPTTLQVKTEGHSPCLIVM), are a transit peptide targeting the chloroplast.

In terms of assembly, component of the chloroplast large ribosomal subunit (LSU). Mature 70S chloroplast ribosomes of higher plants consist of a small (30S) and a large (50S) subunit. The 30S small subunit contains 1 molecule of ribosomal RNA (16S rRNA) and 24 different proteins. The 50S large subunit contains 3 rRNA molecules (23S, 5S and 4.5S rRNA) and 33 different proteins.

The protein localises to the plastid. It localises to the chloroplast. In terms of biological role, component of the chloroplast ribosome (chloro-ribosome), a dedicated translation machinery responsible for the synthesis of chloroplast genome-encoded proteins, including proteins of the transcription and translation machinery and components of the photosynthetic apparatus. This chain is Large ribosomal subunit protein uL24c (RPL24), found in Spinacia oleracea (Spinach).